Consider the following 904-residue polypeptide: Polycystin-2 (904 aa).

The segment at 1 to 102 (MSSSRVRPQA…SSSGGVPGNF (102 aa)) is disordered. The Cytoplasmic portion of the chain corresponds to 1–155 (MSSSRVRPQA…NSNREMYLKT (155 aa)). Over residues 8–20 (PQAPQSPAASASA) the composition is skewed to low complexity. A compositionally biased stretch (basic and acidic residues) spans 26-38 (EGIEMEKMHHEEV). Over residues 86–96 (SVSTTSSSSSG) the composition is skewed to low complexity. Residues 156–177 (VLREMITYILFLLTLCIITYGM) traverse the membrane as a helical segment. Residues 178 to 404 (VSTNMYYYTK…TVRLLRYVSS (227 aa)) are Extracellular-facing. N235, N241, and N264 each carry an N-linked (GlcNAc...) asparagine glycan. C267 and C280 are disulfide-bonded. N298 carries N-linked (GlcNAc...) asparagine glycosylation. A helical transmembrane segment spans residues 405–425 (WDYFVGMCEVSFCLFVLYYLV). The Cytoplasmic portion of the chain corresponds to 426 to 441 (EEALEIRLHRLRYFKS). A helical transmembrane segment spans residues 442-462 (LWNCLDVLIVALSVPAIIMNI). The Extracellular segment spans residues 463–489 (CRTSAVSHRLHFLLENHSTYPNFEPLA). N-linked (GlcNAc...) asparagine glycosylation is present at N478. Residues 490–510 (RLQVHFNNLAAIIVFLSWVKL) form a helical membrane-spanning segment. The Cytoplasmic segment spans residues 511–534 (FKFINFNKTMNQLSTTMSRCAKDL). The helical transmembrane segment at 535-556 (MGFAIMFFIVFLAYAQLAYLVF) threads the bilayer. The Extracellular portion of the chain corresponds to 557–568 (GTQVNDFSTFQA). The pore-forming intramembrane region spans 569–583 (CIFTQFRIILGDFDF). L578 contributes to the Ca(2+) binding site. The Selectivity filter signature appears at 578 to 580 (LGD). Residues 584–591 (SEIEEADS) lie on the Extracellular side of the membrane. A helical membrane pass occupies residues 592 to 612 (VLGPIYFTTFVFFIFMILLNM). Residues 613–904 (FLAIINDTYS…DAAASGPAHL (292 aa)) lie on the Cytoplasmic side of the membrane. Residues 687 to 722 (HSDAEIEAIFAKYDLDGDQELTEHEHQQMRDDLEKE) enclose the EF-hand 1 domain. Ca(2+) is bound by residues D700, D702, D704, E706, and E711. Residues 708-732 (TEHEHQQMRDDLEKEREDLDLEHSS) are compositionally biased toward basic and acidic residues. Disordered stretches follow at residues 708-770 (TEHE…SSGG) and 854-904 (ESDD…PAHL). The tract at residues 740-759 (RSFSRSQDDSEEDDDEDSGH) is linker. One can recognise an EF-hand 2 domain in the interval 768–786 (SGGVSYEEFQVLVRRVDRM). The stretch at 770-809 (GVSYEEFQVLVRRVDRMEHSIGSIVSKIDAVIVKLEAMER) forms a coiled coil. Residues 878–890 (LRPRSSRPPSSLS) are compositionally biased toward low complexity.

It belongs to the polycystin family. In terms of assembly, homotetramer. Component of the heterotetrameric polycystin channel complex with pkd1; the tetramer contains one pkd1 chain and three pkd2 chains. Interacts with pkd1l1. Phosphorylated. Phosphorylation is important for protein function; a mutant human construct that lacks the N-terminal phosphorylation sites cannot complement a zebrafish pkd2-deficient mutant. In terms of processing, N-glycosylated. The four subunits in a tetramer probably differ in the extent of glycosylation; simultaneous glycosylation of all experimentally validated sites would probably create steric hindrance. Post-translationally, sumoylated by SUMO1; sumoylation regulates PKD2 membrane recycling. Detected along cilia and at the cilium basal body in Kupffer's vesicle at the 10 somite stage. Detected in heart at 48hpf. Detected in muscle and pronephric kidney at 48 hpf. Detected on trunk muscle sarcolemma and sarcomere, on ependymal cell cilia in brain, at the apical cell membrane in epithelial cells in the ear, at the lateral line organ and olfactory placode at 56 hpf. Detected in adult kidney (at protein level).

The protein resides in the basolateral cell membrane. It is found in the cell membrane. Its subcellular location is the sarcolemma. It localises to the cytoplasm. The protein localises to the myofibril. The protein resides in the sarcomere. It is found in the sarcoplasmic reticulum membrane. Its subcellular location is the apical cell membrane. It localises to the endoplasmic reticulum membrane. The protein localises to the cell projection. The protein resides in the cilium. It is found in the cytoskeleton. Its subcellular location is the cilium basal body. It localises to the cytoplasmic vesicle membrane. It carries out the reaction K(+)(in) = K(+)(out). It catalyses the reaction Na(+)(in) = Na(+)(out). The catalysed reaction is Ca(2+)(in) = Ca(2+)(out). Channel activity is regulated by phosphorylation. Channel activity is regulated by intracellular Ca(2+). In terms of biological role, forms a nonselective cation channel. Can function as a homotetrameric ion channel or can form heteromer with PKD1. Displays distinct function depending on its subcellular localization and regulation by its binding partners. In the primary cilium functions as a cation channel, with a preference for monovalent cations over divalent cations that allows K(+), Na(+) and Ca(2+) influx, with low selectivity for Ca(2+). In the endoplasmic reticulum, likely functions as a K(+) channel to facilitate Ca(2+) release. Required for normal oscillation of Ca(2+) levels within cilia; these oscillations of the intraciliary Ca(2+) levels can trigger cytoplasmic Ca(2+) signaling cascades. Required for normal temporal variation of the intracellular Ca(2+) levels in the heart. Plays a role in fluid-flow mechanosensation. Required for normal specification of the body left-right axis during embryogenesis, most likely via its role in ciliary Ca(2+) oscillations in Kupffer's vesicle. The polypeptide is Polycystin-2 (Danio rerio (Zebrafish)).